Reading from the N-terminus, the 236-residue chain is Mediator of RNA polymerase II transcription subunit 20 (236 aa).

This sequence belongs to the Mediator complex subunit 20 family. In terms of assembly, component of the Mediator complex.

The protein resides in the nucleus. Component of the Mediator complex, a coactivator involved in the regulated transcription of nearly all RNA polymerase II-dependent genes. Mediator functions as a bridge to convey information from gene-specific regulatory proteins to the basal RNA polymerase II transcription machinery. Mediator is recruited to promoters by direct interactions with regulatory proteins and serves as a scaffold for the assembly of a functional preinitiation complex with RNA polymerase II and the general transcription factors. This chain is Mediator of RNA polymerase II transcription subunit 20 (SRB2), found in Debaryomyces hansenii (strain ATCC 36239 / CBS 767 / BCRC 21394 / JCM 1990 / NBRC 0083 / IGC 2968) (Yeast).